Reading from the N-terminus, the 64-residue chain is Myotoxin-2 (64 aa).

An N-terminal signal peptide occupies residues 1 to 21 (KILYLLFAFLFLAFLSEPGNA). A disulfide bridge links Cys-32 with Cys-51.

Belongs to the crotamine-myotoxin family. In terms of assembly, monomer. As to expression, expressed by the venom gland.

The protein resides in the secreted. Functionally, cationic peptide that possesses multiple functions. It acts as a cell-penetrating peptide (CPP), and as a potent voltage-gated potassium channel (Kv) inhibitor. It exhibits antimicrobial activities, hind limb paralysis, and severe muscle necrosis by a non-enzymatic mechanism. The protein is Myotoxin-2 of Crotalus durissus terrificus (South American rattlesnake).